A 296-amino-acid chain; its full sequence is Protoheme IX farnesyltransferase (296 aa).

The next 9 membrane-spanning stretches (helical) occupy residues 9-29, 36-56, 75-95, 99-119, 133-153, 163-183, 209-229, 234-254, and 265-285; these read VTKP…FLLA, YPLF…GCVF, VLVK…VLGI, LLLY…GFVI, VYGT…GYCA, LILL…IAIF, ITLY…SGYA, LVVA…GYKA, and FVFS…DFNV.

Belongs to the UbiA prenyltransferase family. Protoheme IX farnesyltransferase subfamily.

It localises to the cell inner membrane. It carries out the reaction heme b + (2E,6E)-farnesyl diphosphate + H2O = Fe(II)-heme o + diphosphate. The protein operates within porphyrin-containing compound metabolism; heme O biosynthesis; heme O from protoheme: step 1/1. Its function is as follows. Converts heme B (protoheme IX) to heme O by substitution of the vinyl group on carbon 2 of heme B porphyrin ring with a hydroxyethyl farnesyl side group. The sequence is that of Protoheme IX farnesyltransferase from Yersinia pestis bv. Antiqua (strain Antiqua).